Here is a 511-residue protein sequence, read N- to C-terminus: mRNA export factor (511 aa).

A compositionally biased stretch (low complexity) spans 1–15 (MATDIDMLIDLGLDL). A disordered region spans residues 1 to 244 (MATDIDMLID…ERKAPAADTI (244 aa)). The Nuclear export signal signature appears at 5–17 (IDMLIDLGLDLSD). Ser16 and Ser18 each carry phosphoserine; by host. Composition is skewed to acidic residues over residues 16 to 26 (SDSDLDEDPPE) and 35 to 51 (LESD…EDME). Residues 104–112 (VWSRLGARR) are interaction with host ALYREF. Residues 110 to 138 (ARRPSCSPEQHGGKVARLQPPPTKAQPAR) carry the Nuclear localization signal motif. At Ser114 the chain carries Phosphoserine; by host. Residue Arg138 is modified to Dimethylated arginine; by host. The RGG-box stretch occupies residues 138–152 (RGGRRGRRRGRGRGG). Residues 139-149 (GGRRGRRRGRG) show a composition bias toward basic residues. The residue at position 148 (Arg148) is an Omega-N-methylarginine; by host. Arg150 is subject to Dimethylated arginine; by host. Residues 213–232 (APPPLMTLAIAPPPADPRAP) are compositionally biased toward pro residues. Zn(2+) is bound by residues Cys399, His478, Cys482, and Cys487. The segment at 399 to 487 (CYLKARGLCG…HRQECSSRVC (89 aa)) adopts a CHC2-type zinc-finger fold.

Belongs to the HHV-1 ICP27 protein family. Interacts with host RBP1; this interaction facilitates the RNA polymerase recruitment to viral transcription sites. Interacts (via the RGG box) with host ALYREF/THOC4; this interaction recruits ALYREF to viral replication compartments and probably directs viral mRNA to the TAP/NFX1 pathway. Interacts (via the RGG box) with host SRPK1; this interaction relocalizes SRPK1 to the nucleus and seems to alter its activity. Interacts with ICP4; this interaction modulates ICP4 DNA-binding activity. Interacts with host NXF1; this interaction allows efficient export of HSV-1 early and late transcripts. Post-translationally, methylated within the RGG box possibly by host PRMT1. When hypomethylated, ICP27 is exported to the cytoplasm earlier and more rapidly. Phosphorylated.

Its subcellular location is the host cytoplasm. It localises to the host nucleus. In terms of biological role, multifunctional regulator of the expression of viral genes that contributes to the shutoff of host protein synthesis and mediates nuclear export of viral intronless mRNAs. Early in infection, this immediate early (EI) protein mediates the inhibition of cellular splicing. This results in the accumulation of unprocessed 3'end pre-mRNAs which can't be exported from the nucleus. Cellular protein synthesis is thereby shut off early after virus infection. Later in the infection, it helps recruit cellular RNA polymerase II to viral replication sites and promotes the nuclear export of viral intronless mRNAs by interacting with mRNAs and host NXF1/TAP. ICP27 binds to NUP62 which may provide facilitated viral mRNA export and may compete with some host cell transport receptors for binding and inhibit cellular nucleocytoplasmic transport pathways. Also stimulates translation of viral transcripts. Repression of host gene expression blocks the cell cycle at the G1 phase and prevents apoptosis. Seems to silence the 3' splice site of the promyelocytic leukemia (PML) intron 7a, thereby switching PML isoforms from PML-II to PML-V. This could be linked to the accelerated mRNA export induced by ICP27 which might not provide sufficient time for PML pre-mRNA to be spliced in the nucleus. This chain is mRNA export factor, found in Human herpesvirus 1 (strain HFEM) (HHV-1).